The chain runs to 78 residues: RNA-binding protein Hfq (78 aa).

Residues 10–69 (DPFLNTLRKEHVPVSIYLVNGIKLQGQIESFDQYVVLLRNTVTQMVYKHAISTVVPARAV) form the Sm domain.

Belongs to the Hfq family. In terms of assembly, homohexamer.

RNA chaperone that binds small regulatory RNA (sRNAs) and mRNAs to facilitate mRNA translational regulation in response to envelope stress, environmental stress and changes in metabolite concentrations. Also binds with high specificity to tRNAs. In Bordetella bronchiseptica (strain ATCC BAA-588 / NCTC 13252 / RB50) (Alcaligenes bronchisepticus), this protein is RNA-binding protein Hfq.